We begin with the raw amino-acid sequence, 453 residues long: MLQLGSQPHETFAKLSKKYGPLMSIHLGSLYTVIVSSPEMAKEIMHKYGQVFSGRTIAQAVHACDHDKISMGFLPVGAEWRDMRKICKEQMFSHQSMEDSQNLRKQKLQQLLDYTQKCSEEGRGIDIREAAFITTLNLMSATLFSMQATEFDSKVTMEFKEIIEGVASIVGVPNFADYFPILRPFDPQGVKRRADVYFGRLLGLIEGYLNERIEFRKANPNAPKKDDFLETLVDALDAKDYKLKTEHLTHLMLDLFVGGSETSTTEIEWIMWELVASPEKMAKVKAELKSVMGGEKVVDESMMPRLPYLQAVVKESMRLHPPGPLLLPRKAESDQVVNGYLIPKGTQVLINAWAMGRDSSLWKNPDSFEPERFLDQKIDFKGTDYELIPFGSGRRVCPGMPLANRILHTVTATLVHNFDWKLERPEANDAHKGVLFGFAVRRAVPLKIVPIKA.

Residues 15–35 form a helical membrane-spanning segment; the sequence is LSKKYGPLMSIHLGSLYTVIV. Residue Cys397 coordinates heme.

The protein belongs to the cytochrome P450 family. Heme serves as cofactor. Expressed in leaf glandular trichomes.

The protein resides in the membrane. It catalyses the reaction abieta-8,11,13-triene + reduced [NADPH--hemoprotein reductase] + O2 = ferruginol + oxidized [NADPH--hemoprotein reductase] + H2O + H(+). The enzyme catalyses ferruginol + reduced [NADPH--hemoprotein reductase] + O2 = 11-hydroxyferruginol + oxidized [NADPH--hemoprotein reductase] + H2O + H(+). It carries out the reaction miltiradiene + 2 reduced [NADPH--hemoprotein reductase] + 2 O2 = 11-oxomiltiradiene + 2 oxidized [NADPH--hemoprotein reductase] + 3 H2O + 2 H(+). It functions in the pathway secondary metabolite biosynthesis; terpenoid biosynthesis. Monooxygenase involved in the biosynthesis of labdane-related diterpenes natural products. Catalyzes the oxidation of abietatriene to produce ferruginol. Ferruginol is an intermediate in the biosynthesis of carnosate, a potent antioxidant. May also convert miltiradiene into 11-oxomiltiradiene. In Salvia pomifera (Apple sage), this protein is Ferruginol synthase.